The following is a 330-amino-acid chain: Ketol-acid reductoisomerase (NADP(+)) (330 aa).

The region spanning valine 2–threonine 182 is the KARI N-terminal Rossmann domain. NADP(+) is bound by residues tyrosine 25 to glutamine 28, arginine 48, serine 53, and aspartate 83 to glutamine 86. Histidine 108 is an active-site residue. Residue glycine 134 participates in NADP(+) binding. The region spanning threonine 183–glutamate 328 is the KARI C-terminal knotted domain. Aspartate 191, glutamate 195, glutamate 227, and glutamate 231 together coordinate Mg(2+). Serine 252 contacts substrate.

The protein belongs to the ketol-acid reductoisomerase family. It depends on Mg(2+) as a cofactor.

It catalyses the reaction (2R)-2,3-dihydroxy-3-methylbutanoate + NADP(+) = (2S)-2-acetolactate + NADPH + H(+). The enzyme catalyses (2R,3R)-2,3-dihydroxy-3-methylpentanoate + NADP(+) = (S)-2-ethyl-2-hydroxy-3-oxobutanoate + NADPH + H(+). Its pathway is amino-acid biosynthesis; L-isoleucine biosynthesis; L-isoleucine from 2-oxobutanoate: step 2/4. The protein operates within amino-acid biosynthesis; L-valine biosynthesis; L-valine from pyruvate: step 2/4. Involved in the biosynthesis of branched-chain amino acids (BCAA). Catalyzes an alkyl-migration followed by a ketol-acid reduction of (S)-2-acetolactate (S2AL) to yield (R)-2,3-dihydroxy-isovalerate. In the isomerase reaction, S2AL is rearranged via a Mg-dependent methyl migration to produce 3-hydroxy-3-methyl-2-ketobutyrate (HMKB). In the reductase reaction, this 2-ketoacid undergoes a metal-dependent reduction by NADPH to yield (R)-2,3-dihydroxy-isovalerate. This Methanocaldococcus jannaschii (strain ATCC 43067 / DSM 2661 / JAL-1 / JCM 10045 / NBRC 100440) (Methanococcus jannaschii) protein is Ketol-acid reductoisomerase (NADP(+)).